A 370-amino-acid chain; its full sequence is G-protein coupled receptor homolog K2 (370 aa).

At 1 to 61 (MTSPTNSTML…CTFLEDTKYH (61 aa)) the chain is on the extracellular side. 2 N-linked (GlcNAc...) asparagine; by host glycosylation sites follow: Asn6 and Asn51. Residues 62-82 (IIVIHIILFLLGSIGNIFVVS) traverse the membrane as a helical segment. Topologically, residues 83 to 94 (LIAFKRNKSITD) are cytoplasmic. The chain crosses the membrane as a helical span at residues 95–115 (IYILNLSMSDCIFVFQIPFIV). Residues 116–131 (YSKLDQWIFGNILCKI) lie on the Extracellular side of the membrane. Residues 132-152 (MSVLYYVGFFSNMFIITLMSI) traverse the membrane as a helical segment. Residues 153 to 171 (DRYFAIVHPIKRQPYRTKR) are Cytoplasmic-facing. The helical transmembrane segment at 172–192 (IGILMCCSAWLLSLILSSPVS) threads the bilayer. Residues 193 to 223 (KLYENIPHMSKDIYQCTLTNENDSIIAFIKR) are Extracellular-facing. Residues 224 to 244 (LMQIEITILGFLIPIIIFVYC) form a helical membrane-spanning segment. The Cytoplasmic segment spans residues 245-265 (YYRIFTTVVRLRNRRKYKSIK). The chain crosses the membrane as a helical span at residues 266-286 (IVLMIVVCSLICWIPLYIVLM). Residues 287-300 (IATIVSLYTSNIFR) are Extracellular-facing. The chain crosses the membrane as a helical span at residues 301–321 (HLCLYLNLAYAITFSETISLA). Residues 322–370 (RCCINPIIYTLIGEHVRSRISSICSCIYRDNRIRKKLFSRKSSSSSNII) lie on the Cytoplasmic side of the membrane.

The protein belongs to the G-protein coupled receptor 1 family.

It localises to the host cell membrane. In terms of biological role, putative chemokine receptor. The sequence is that of G-protein coupled receptor homolog K2 from Sus scrofa (Pig).